Consider the following 236-residue polypeptide: Uridylate kinase (236 aa).

12–15 (KLSG) serves as a coordination point for ATP. The tract at residues 20 to 25 (GEKGFG) is involved in allosteric activation by GTP. A UMP-binding site is contributed by glycine 54. 2 residues coordinate ATP: glycine 55 and arginine 59. Residues aspartate 72 and 133–140 (TGNPYFST) each bind UMP. Positions 161, 166, and 169 each coordinate ATP.

This sequence belongs to the UMP kinase family. As to quaternary structure, homohexamer.

It is found in the cytoplasm. It catalyses the reaction UMP + ATP = UDP + ADP. It participates in pyrimidine metabolism; CTP biosynthesis via de novo pathway; UDP from UMP (UMPK route): step 1/1. Its activity is regulated as follows. Allosterically activated by GTP. Inhibited by UTP. Its function is as follows. Catalyzes the reversible phosphorylation of UMP to UDP. This Alkaliphilus oremlandii (strain OhILAs) (Clostridium oremlandii (strain OhILAs)) protein is Uridylate kinase.